A 202-amino-acid polypeptide reads, in one-letter code: Potassium-transporting ATPase KdpC subunit 1 (202 aa).

The helical transmembrane segment at 17 to 37 (LWVIAAVIYPFFMIAVGQIVF) threads the bilayer.

The protein belongs to the KdpC family. The system is composed of three essential subunits: KdpA, KdpB and KdpC.

The protein localises to the cell inner membrane. Functionally, part of the high-affinity ATP-driven potassium transport (or Kdp) system, which catalyzes the hydrolysis of ATP coupled with the electrogenic transport of potassium into the cytoplasm. This subunit acts as a catalytic chaperone that increases the ATP-binding affinity of the ATP-hydrolyzing subunit KdpB by the formation of a transient KdpB/KdpC/ATP ternary complex. This Nostoc sp. (strain PCC 7120 / SAG 25.82 / UTEX 2576) protein is Potassium-transporting ATPase KdpC subunit 1.